The primary structure comprises 394 residues: Elongation factor Tu 2 (394 aa).

Positions 10–204 (KPHVNVGTIG…HLDTYIPEPE (195 aa)) constitute a tr-type G domain. The segment at 19-26 (GHVDHGKT) is G1. 19–26 (GHVDHGKT) contributes to the GTP binding site. A Mg(2+)-binding site is contributed by Thr26. The G2 stretch occupies residues 60–64 (GITIN). Positions 81 to 84 (DCPG) are G3. Residues 81 to 85 (DCPGH) and 136 to 139 (NKCD) each bind GTP. Residues 136-139 (NKCD) are G4. The tract at residues 174 to 176 (SAL) is G5.

Belongs to the TRAFAC class translation factor GTPase superfamily. Classic translation factor GTPase family. EF-Tu/EF-1A subfamily. In terms of assembly, monomer.

The protein localises to the cytoplasm. The catalysed reaction is GTP + H2O = GDP + phosphate + H(+). GTP hydrolase that promotes the GTP-dependent binding of aminoacyl-tRNA to the A-site of ribosomes during protein biosynthesis. This chain is Elongation factor Tu 2, found in Haemophilus influenzae (strain 86-028NP).